Reading from the N-terminus, the 58-residue chain is Small ribosomal subunit protein bS21 (58 aa).

The interval 27-58 is disordered; sequence GTLQELRKREHYEKPSVKRKRKSEAARKRKKY. A compositionally biased stretch (basic and acidic residues) spans 31-42; it reads ELRKREHYEKPS. The segment covering 43-58 has biased composition (basic residues); that stretch reads VKRKRKSEAARKRKKY.

The protein belongs to the bacterial ribosomal protein bS21 family.

The polypeptide is Small ribosomal subunit protein bS21 (rpsU) (Lactococcus lactis subsp. lactis (strain IL1403) (Streptococcus lactis)).